A 711-amino-acid polypeptide reads, in one-letter code: Ribosomal RNA large subunit methyltransferase K/L (711 aa).

The region spanning Thr-43–Leu-154 is the THUMP domain.

This sequence belongs to the methyltransferase superfamily. RlmKL family.

It localises to the cytoplasm. The catalysed reaction is guanosine(2445) in 23S rRNA + S-adenosyl-L-methionine = N(2)-methylguanosine(2445) in 23S rRNA + S-adenosyl-L-homocysteine + H(+). It catalyses the reaction guanosine(2069) in 23S rRNA + S-adenosyl-L-methionine = N(2)-methylguanosine(2069) in 23S rRNA + S-adenosyl-L-homocysteine + H(+). Specifically methylates the guanine in position 2445 (m2G2445) and the guanine in position 2069 (m7G2069) of 23S rRNA. In Haemophilus influenzae (strain 86-028NP), this protein is Ribosomal RNA large subunit methyltransferase K/L.